We begin with the raw amino-acid sequence, 430 residues long: UDP-N-acetylglucosamine 1-carboxyvinyltransferase 1 (430 aa).

A phosphoenolpyruvate-binding site is contributed by 22-23 (KN). Arginine 93 contacts UDP-N-acetyl-alpha-D-glucosamine. Cysteine 117 functions as the Proton donor in the catalytic mechanism. Residue cysteine 117 is modified to 2-(S-cysteinyl)pyruvic acid O-phosphothioketal. UDP-N-acetyl-alpha-D-glucosamine-binding positions include 122–126 (RPVDL), aspartate 305, and valine 327.

It belongs to the EPSP synthase family. MurA subfamily.

The protein localises to the cytoplasm. The enzyme catalyses phosphoenolpyruvate + UDP-N-acetyl-alpha-D-glucosamine = UDP-N-acetyl-3-O-(1-carboxyvinyl)-alpha-D-glucosamine + phosphate. The protein operates within cell wall biogenesis; peptidoglycan biosynthesis. In terms of biological role, cell wall formation. Adds enolpyruvyl to UDP-N-acetylglucosamine. In Listeria monocytogenes serotype 4b (strain F2365), this protein is UDP-N-acetylglucosamine 1-carboxyvinyltransferase 1.